We begin with the raw amino-acid sequence, 529 residues long: Peptide chain release factor 3 (529 aa).

The tr-type G domain occupies 11-280 (NKRRTFAIIS…GLVKWAPAPM (270 aa)). Residues 20–27 (SHPDAGKT), 88–92 (DTPGH), and 142–145 (NKLD) each bind GTP.

This sequence belongs to the TRAFAC class translation factor GTPase superfamily. Classic translation factor GTPase family. PrfC subfamily.

The protein resides in the cytoplasm. In terms of biological role, increases the formation of ribosomal termination complexes and stimulates activities of RF-1 and RF-2. It binds guanine nucleotides and has strong preference for UGA stop codons. It may interact directly with the ribosome. The stimulation of RF-1 and RF-2 is significantly reduced by GTP and GDP, but not by GMP. This Proteus mirabilis (strain HI4320) protein is Peptide chain release factor 3.